A 287-amino-acid chain; its full sequence is Bifunctional protein FolD (287 aa).

Residues 166 to 168 (GAS), Ser191, and Ile232 each bind NADP(+).

This sequence belongs to the tetrahydrofolate dehydrogenase/cyclohydrolase family. As to quaternary structure, homodimer.

The enzyme catalyses (6R)-5,10-methylene-5,6,7,8-tetrahydrofolate + NADP(+) = (6R)-5,10-methenyltetrahydrofolate + NADPH. It catalyses the reaction (6R)-5,10-methenyltetrahydrofolate + H2O = (6R)-10-formyltetrahydrofolate + H(+). Its pathway is one-carbon metabolism; tetrahydrofolate interconversion. Its function is as follows. Catalyzes the oxidation of 5,10-methylenetetrahydrofolate to 5,10-methenyltetrahydrofolate and then the hydrolysis of 5,10-methenyltetrahydrofolate to 10-formyltetrahydrofolate. The sequence is that of Bifunctional protein FolD from Haemophilus ducreyi (strain 35000HP / ATCC 700724).